Reading from the N-terminus, the 247-residue chain is 3-deoxy-manno-octulosonate cytidylyltransferase (247 aa).

This sequence belongs to the KdsB family.

The protein localises to the cytoplasm. The enzyme catalyses 3-deoxy-alpha-D-manno-oct-2-ulosonate + CTP = CMP-3-deoxy-beta-D-manno-octulosonate + diphosphate. The protein operates within nucleotide-sugar biosynthesis; CMP-3-deoxy-D-manno-octulosonate biosynthesis; CMP-3-deoxy-D-manno-octulosonate from 3-deoxy-D-manno-octulosonate and CTP: step 1/1. It functions in the pathway bacterial outer membrane biogenesis; lipopolysaccharide biosynthesis. Activates KDO (a required 8-carbon sugar) for incorporation into bacterial lipopolysaccharide in Gram-negative bacteria. The chain is 3-deoxy-manno-octulosonate cytidylyltransferase from Pelodictyon phaeoclathratiforme (strain DSM 5477 / BU-1).